The sequence spans 401 residues: Acetate kinase (401 aa).

Position 9 (N9) interacts with Mg(2+). K16 serves as a coordination point for ATP. R88 serves as a coordination point for substrate. Residue D147 is the Proton donor/acceptor of the active site. ATP-binding positions include 207–211 (HLGNG), 282–284 (DCR), and 333–337 (GIGEN). E388 is a binding site for Mg(2+).

The protein belongs to the acetokinase family. As to quaternary structure, homodimer. Mg(2+) serves as cofactor. Mn(2+) is required as a cofactor.

The protein resides in the cytoplasm. It catalyses the reaction acetate + ATP = acetyl phosphate + ADP. It functions in the pathway metabolic intermediate biosynthesis; acetyl-CoA biosynthesis; acetyl-CoA from acetate: step 1/2. In terms of biological role, catalyzes the formation of acetyl phosphate from acetate and ATP. Can also catalyze the reverse reaction. The sequence is that of Acetate kinase from Haemophilus influenzae (strain PittGG).